The sequence spans 263 residues: Proteasome subunit alpha (263 aa).

The disordered stretch occupies residues 229–263 (AALLQDTPPDDADADADAGKKPANDGNLPPNDDKS).

The protein belongs to the peptidase T1A family. As to quaternary structure, the 20S proteasome core is composed of 14 alpha and 14 beta subunits that assemble into four stacked heptameric rings, resulting in a barrel-shaped structure. The two inner rings, each composed of seven catalytic beta subunits, are sandwiched by two outer rings, each composed of seven alpha subunits. The catalytic chamber with the active sites is on the inside of the barrel. Has a gated structure, the ends of the cylinder being occluded by the N-termini of the alpha-subunits. Is capped by the proteasome-associated ATPase, ARC.

It localises to the cytoplasm. The protein operates within protein degradation; proteasomal Pup-dependent pathway. With respect to regulation, the formation of the proteasomal ATPase ARC-20S proteasome complex, likely via the docking of the C-termini of ARC into the intersubunit pockets in the alpha-rings, may trigger opening of the gate for substrate entry. Interconversion between the open-gate and close-gate conformations leads to a dynamic regulation of the 20S proteasome proteolysis activity. Functionally, component of the proteasome core, a large protease complex with broad specificity involved in protein degradation. The sequence is that of Proteasome subunit alpha from Actinosynnema mirum (strain ATCC 29888 / DSM 43827 / JCM 3225 / NBRC 14064 / NCIMB 13271 / NRRL B-12336 / IMRU 3971 / 101).